Consider the following 118-residue polypeptide: Nucleoid-associated protein TM_0687 (118 aa).

The protein belongs to the YbaB/EbfC family. In terms of assembly, homodimer.

The protein localises to the cytoplasm. It localises to the nucleoid. Binds to DNA and alters its conformation. May be involved in regulation of gene expression, nucleoid organization and DNA protection. The chain is Nucleoid-associated protein TM_0687 from Thermotoga maritima (strain ATCC 43589 / DSM 3109 / JCM 10099 / NBRC 100826 / MSB8).